The primary structure comprises 339 residues: LRQPSSASNRTAASLDGQETPFQYEITDHGYGKDAVKVLHVSRKGPVHTIQEFEVGTHLKLYSKKDYYQGNNSDIVATDSQKNTVYLLAKKYGIESPEKFALLLGQHFLNKYSHVEEAHVHVETYPWQRVCQEETKASTTVGQGSCNFSSIDNRSLHNHAFIFTPTALHYCDVVIXRQDPKQTVITGIKGLRVLKTTQSSFVNFVNDEXRSLPDQYDRIFSTVVDCSWEYSDTDTVNFSRAWQQVKNIILRNFAGDPQVGVSSPSVQHTLYLSEKQVLDVIPQVSVISMTMPNKHYFNFDTKPFQQIVPGDNNEVFIPVDKPHGTIYAQLARKNLNSHL.

Residues lysine 33 and threonine 78 each act as charge relay system in the active site. 7 residues coordinate urate: threonine 78, aspartate 79, phenylalanine 201, arginine 218, valine 266, glutamine 267, and asparagine 293. The active-site Charge relay system is the histidine 295. A Microbody targeting signal motif is present at residues 337-339 (SHL).

It belongs to the uricase family.

It is found in the peroxisome. The enzyme catalyses urate + O2 + H2O = 5-hydroxyisourate + H2O2. It functions in the pathway purine metabolism; urate degradation; (S)-allantoin from urate: step 1/3. Functionally, catalyzes the oxidation of uric acid to 5-hydroxyisourate, which is further processed to form (S)-allantoin. The polypeptide is Uricase (Uro) (Drosophila subobscura (Fruit fly)).